The primary structure comprises 203 residues: tRNA (pseudouridine(54)-N(1))-methyltransferase (203 aa).

The S-adenosyl-L-methionine site is built by leucine 135 and glycine 156.

Belongs to the methyltransferase superfamily. TrmY family. Homodimer.

The protein localises to the cytoplasm. It catalyses the reaction pseudouridine(54) in tRNA + S-adenosyl-L-methionine = N(1)-methylpseudouridine(54) in tRNA + S-adenosyl-L-homocysteine + H(+). Its function is as follows. Specifically catalyzes the N1-methylation of pseudouridine at position 54 (Psi54) in tRNAs. The protein is tRNA (pseudouridine(54)-N(1))-methyltransferase of Thermococcus onnurineus (strain NA1).